A 282-amino-acid polypeptide reads, in one-letter code: Probable endonuclease 4 (282 aa).

Zn(2+) is bound by residues histidine 66, histidine 106, glutamate 143, aspartate 177, histidine 180, histidine 214, aspartate 227, histidine 229, and glutamate 259.

The protein belongs to the AP endonuclease 2 family. It depends on Zn(2+) as a cofactor.

It carries out the reaction Endonucleolytic cleavage to 5'-phosphooligonucleotide end-products.. In terms of biological role, endonuclease IV plays a role in DNA repair. It cleaves phosphodiester bonds at apurinic or apyrimidinic (AP) sites, generating a 3'-hydroxyl group and a 5'-terminal sugar phosphate. The polypeptide is Probable endonuclease 4 (Nitratidesulfovibrio vulgaris (strain ATCC 29579 / DSM 644 / CCUG 34227 / NCIMB 8303 / VKM B-1760 / Hildenborough) (Desulfovibrio vulgaris)).